The chain runs to 440 residues: Elongation factor 1-gamma (440 aa).

Ala2 is subject to N-acetylalanine. In terms of domain architecture, GST N-terminal spans 2–87 (AAGTLYTYPE…YVSNEELRGS (86 aa)). A GST C-terminal domain is found at 88-216 (TPEAAAQVVQ…VKLCEKMAQF (129 aa)). 2 positions are modified to N6-acetyllysine: Lys147 and Lys212. Residues 221–257 (FAESQPKKDTPRKEKGSREEKLKPQAERKEGKEEKKA) show a composition bias toward basic and acidic residues. The disordered stretch occupies residues 221-267 (FAESQPKKDTPRKEKGSREEKLKPQAERKEGKEEKKAAAPAPEEELD). A Glycyl lysine isopeptide (Lys-Gly) (interchain with G-Cter in SUMO1) cross-link involves residue Lys256. The EF-1-gamma C-terminal domain occupies 279–440 (AKDPFAHLPK…KAFNQGKIFK (162 aa)). Lys288 participates in a covalent cross-link: Glycyl lysine isopeptide (Lys-Gly) (interchain with G-Cter in SUMO2). N6-acetyllysine is present on Lys404. An N6-acetyllysine; alternate modification is found at Lys437. Lys437 carries the N6-malonyllysine; alternate modification.

EF-1 is composed of four subunits: alpha, beta, delta, and gamma.

Its function is as follows. Probably plays a role in anchoring the complex to other cellular components. This is Elongation factor 1-gamma (EEF1G) from Bos taurus (Bovine).